The chain runs to 219 residues: Pyridoxal 5'-phosphate synthase subunit PDX2 (219 aa).

52 to 54 (GES) provides a ligand contact to L-glutamine. Cys-87 acts as the Nucleophile in catalysis. L-glutamine contacts are provided by residues Arg-121 and 153-154 (IR). Active-site charge relay system residues include His-196 and Glu-198.

Belongs to the glutaminase PdxT/SNO family. In the presence of Pdx1, forms a dodecamer of heterodimers. Only shows activity in the heterodimer.

Its subcellular location is the cytoplasm. The enzyme catalyses aldehydo-D-ribose 5-phosphate + D-glyceraldehyde 3-phosphate + L-glutamine = pyridoxal 5'-phosphate + L-glutamate + phosphate + 3 H2O + H(+). It carries out the reaction L-glutamine + H2O = L-glutamate + NH4(+). It participates in cofactor biosynthesis; pyridoxal 5'-phosphate biosynthesis. Catalyzes the hydrolysis of glutamine to glutamate and ammonia as part of the biosynthesis of pyridoxal 5'-phosphate. The resulting ammonia molecule is channeled to the active site of Pdx1. The chain is Pyridoxal 5'-phosphate synthase subunit PDX2 from Plasmodium falciparum (isolate 3D7).